We begin with the raw amino-acid sequence, 337 residues long: Ribosomal RNA small subunit methyltransferase H (337 aa).

Residues 45-47 (GGH), Asp64, His91, Asp112, and Gln119 contribute to the S-adenosyl-L-methionine site.

Belongs to the methyltransferase superfamily. RsmH family.

Its subcellular location is the cytoplasm. It carries out the reaction cytidine(1402) in 16S rRNA + S-adenosyl-L-methionine = N(4)-methylcytidine(1402) in 16S rRNA + S-adenosyl-L-homocysteine + H(+). Specifically methylates the N4 position of cytidine in position 1402 (C1402) of 16S rRNA. In Cutibacterium acnes (strain DSM 16379 / KPA171202) (Propionibacterium acnes), this protein is Ribosomal RNA small subunit methyltransferase H.